The primary structure comprises 242 residues: Probable 2-phosphosulfolactate phosphatase (242 aa).

The protein belongs to the ComB family. It depends on Mg(2+) as a cofactor.

It catalyses the reaction (2R)-O-phospho-3-sulfolactate + H2O = (2R)-3-sulfolactate + phosphate. This is Probable 2-phosphosulfolactate phosphatase from Synechococcus sp. (strain JA-3-3Ab) (Cyanobacteria bacterium Yellowstone A-Prime).